The chain runs to 45 residues: Lysis protein for colicin E1 (45 aa).

Positions M1–G17 are cleaved as a signal peptide. C18 carries N-palmitoyl cysteine lipidation. A lipid anchor (S-diacylglycerol cysteine) is attached at C18.

Its subcellular location is the cell outer membrane. Lysis proteins are required for both colicin release and partial cell lysis. The sequence is that of Lysis protein for colicin E1 (lys) from Escherichia coli.